The chain runs to 33 residues: Protamine (33 aa).

The segment at 1 to 33 (MPRRRRSSSRPVRRRRRPRVSRRRRRRGGRRRR) is disordered.

In terms of tissue distribution, testis.

The protein localises to the nucleus. Its subcellular location is the chromosome. Protamines substitute for histones in the chromatin of sperm during the haploid phase of spermatogenesis. They compact sperm DNA into a highly condensed, stable and inactive complex. This chain is Protamine, found in Oncorhynchus keta (Chum salmon).